The chain runs to 548 residues: Chaperone Ric-8A (548 aa).

Disordered regions lie at residues 443-484 (DPGH…EGMT) and 517-548 (GKMT…SDTN).

Belongs to the synembryn family.

The protein localises to the cytoplasm. It is found in the cell cortex. Functionally, chaperone that specifically binds and folds nascent G alpha proteins prior to G protein heterotrimer formation, promoting their stability and activity: folds GNAI1, GNAO1, GNA13 and GNAQ. Does not fold G(s) G-alpha proteins GNAS nor GNAL. Also acts as a guanine nucleotide exchange factor (GEF) for G alpha proteins by stimulating exchange of bound GDP for free GTP. This chain is Chaperone Ric-8A (ric8a), found in Danio rerio (Zebrafish).